Reading from the N-terminus, the 441-residue chain is C4-dicarboxylate transport protein (441 aa).

Residues 1-30 lie on the Cytoplasmic side of the membrane; that stretch reads MIIEHSAEVRGKTPLYRHLYVQVLAAIAAG. A helical transmembrane segment spans residues 31–49; the sequence is ILLGHFYPDIGTELKPLGD. The Periplasmic segment spans residues 50 to 68; sequence AFIRLVKMIIAPVIFLTVA. Residues 69–87 form a helical membrane-spanning segment; sequence TGIAGMTDLAKVGRVAGKA. At 88–99 the chain is on the cytoplasmic side; it reads MIYFLAFSTLAL. The helical transmembrane segment at 100 to 118 threads the bilayer; it reads VVGLVVANVVQPGAGMHID. Over 119-149 the chain is Periplasmic; it reads PASLDAKAVATYAEKAHEQSITGFLMNIIPT. The chain crosses the membrane as a helical span at residues 150–168; it reads TLVGAFAEGDILQVLFISV. Residues 169–171 are Cytoplasmic-facing; it reads LFG. Residues 172-190 traverse the membrane as a helical segment; sequence ISLAIVGKKAEPVVDFLQA. Over 191–209 the chain is Periplasmic; that stretch reads LTLPIFRLVAILMKAAPIG. Residues 210 to 228 traverse the membrane as a helical segment; it reads AFGAMAFTIGKYGIASIAN. Residues 229 to 241 lie on the Cytoplasmic side of the membrane; sequence LAMLIGTFYLTSF. Residues 242-260 form a helical membrane-spanning segment; it reads LFVFIVLGAVARYNGFSIL. Over 261-281 the chain is Periplasmic; sequence SLIRYIKEELLLVLGTSSSEA. A helical membrane pass occupies residues 282–300; it reads ALPGLMNKMEKAGCKRSVV. Over 301-320 the chain is Cytoplasmic; sequence GLVIPTGYSFNLDGTNIYMT. The chain crosses the membrane as a helical span at residues 321-339; the sequence is LAALFIAQATDTPLSYGDQ. Residues 340–350 lie on the Periplasmic side of the membrane; it reads ILLLLVAMLSS. The chain crosses the membrane as a helical span at residues 351-369; sequence KGAAGITGAGFITLAATLS. At 370-378 the chain is on the cytoplasmic side; the sequence is VVPSVPVAG. The helical transmembrane segment at 379 to 398 threads the bilayer; it reads MALILGIDRFMSECRALTNF. Over 399-405 the chain is Periplasmic; it reads VGNAVAT. A helical membrane pass occupies residues 406 to 424; that stretch reads IVVAKWEGELDQAQLSAAL. Topologically, residues 425 to 441 are cytoplasmic; it reads GGEASVEAIPAVVQPAE.

The protein belongs to the dicarboxylate/amino acid:cation symporter (DAACS) (TC 2.A.23) family.

Its subcellular location is the cell inner membrane. Its function is as follows. Responsible for the transport of dicarboxylates such as succinate, fumarate, and malate from the periplasm across the inner membrane. This transport system plays an important role in the energy supply of rhizobium-legume symbionts. The chain is C4-dicarboxylate transport protein (dctA) from Rhizobium meliloti (strain 1021) (Ensifer meliloti).